The following is a 789-amino-acid chain: Glycerol-3-phosphate acyltransferase (789 aa).

The short motif at 275 to 280 (SHRSYI) is the HXXXXD motif element.

The protein belongs to the GPAT/DAPAT family.

The protein localises to the cell membrane. The catalysed reaction is sn-glycerol 3-phosphate + an acyl-CoA = a 1-acyl-sn-glycero-3-phosphate + CoA. Its pathway is phospholipid metabolism; CDP-diacylglycerol biosynthesis; CDP-diacylglycerol from sn-glycerol 3-phosphate: step 1/3. This chain is Glycerol-3-phosphate acyltransferase, found in Mycobacterium tuberculosis (strain ATCC 25177 / H37Ra).